A 171-amino-acid polypeptide reads, in one-letter code: MQNSTCQAVGECRVPEHAVLPQPLYREVVQFIESLPQKEGHLVTVLHKAQSVFGYLPIEVQQFVADHMEVPLAQVYGVVSFYTFFTMVPKGKYPISVCMGTACFVKGADKVVHAFKEQLKIDIGDVTPDGRFSIDTLRCVGGCALAPIVMVGEKVYGNVTPGQVKKILAEY.

[2Fe-2S] cluster contacts are provided by Cys-98, Cys-103, Cys-139, and Cys-143.

The protein belongs to the complex I 24 kDa subunit family. Heterotetramer composed of HndA, HndB, HndC and HndD subunits. HndA and HndB could form a heterodimeric intermediate in the electron transfer between the active site of hydrogenase subunit HndD and the NADP reduction site of the reducing subunit HndC. The cofactor is [2Fe-2S] cluster.

The catalysed reaction is H2 + NADP(+) = NADPH + H(+). With respect to regulation, inhibited by oxygen. Its function is as follows. Catalyzes the reduction of NADP in the presence of molecular H(2) to yield NADPH. This Solidesulfovibrio fructosivorans (Desulfovibrio fructosivorans) protein is NADP-reducing hydrogenase subunit HndA (hndA).